The primary structure comprises 766 residues: Cytoplasmic polyadenylation element-binding protein 3 (766 aa).

Disordered regions lie at residues 1–35 (MSQE…TSET), 131–179 (VPSR…ARRL), and 216–299 (PVPI…LPPR). Composition is skewed to polar residues over residues 233–256 (ETPT…SDYQ) and 276–289 (STPN…NRDN). The RRM domain occupies 310–332 (IFVGGVPWDITEAALKDSFGEFG). The tract at residues 578–602 (KAFSGPNRRSHLSSNSPSKPASLMS) is disordered. The segment covering 589-602 (LSSNSPSKPASLMS) has biased composition (low complexity).

Cytoplasmic polyadenylation element binding protein that binds to and regulates the translation of specific mRNAs. The sequence is that of Cytoplasmic polyadenylation element-binding protein 3 (cpb-3) from Caenorhabditis remanei (Caenorhabditis vulgaris).